The sequence spans 381 residues: Phenylalanine dehydrogenase (381 aa).

Arg-55 lines the NAD(+) pocket. Lys-79 lines the L-phenylalanine pocket. Residue Lys-91 is part of the active site. Residues Asp-126, Ser-157, Thr-161, 191-197 (GLGKVGY), 214-215 (DI), 254-255 (AM), and 275-277 (SAN) each bind NAD(+). Residue Asn-277 participates in L-phenylalanine binding.

The protein belongs to the Glu/Leu/Phe/Val dehydrogenases family.

It carries out the reaction L-phenylalanine + NAD(+) + H2O = 3-phenylpyruvate + NH4(+) + NADH + H(+). The protein operates within amino-acid biosynthesis; L-phenylalanine biosynthesis; L-phenylalanine from phenylpyruvate (PDH route): step 1/1. Catalyzes the reversible NAD(+)-dependent oxidative deamination of L-phenylalanine to phenylpyruvate. The sequence is that of Phenylalanine dehydrogenase from Lysinibacillus sphaericus (Bacillus sphaericus).